A 273-amino-acid chain; its full sequence is Ribosomal RNA small subunit methyltransferase A (273 aa).

6 residues coordinate S-adenosyl-L-methionine: Asn18, Leu20, Gly45, Glu66, Asp91, and Asn113.

The protein belongs to the class I-like SAM-binding methyltransferase superfamily. rRNA adenine N(6)-methyltransferase family. RsmA subfamily.

The protein localises to the cytoplasm. It catalyses the reaction adenosine(1518)/adenosine(1519) in 16S rRNA + 4 S-adenosyl-L-methionine = N(6)-dimethyladenosine(1518)/N(6)-dimethyladenosine(1519) in 16S rRNA + 4 S-adenosyl-L-homocysteine + 4 H(+). In terms of biological role, specifically dimethylates two adjacent adenosines (A1518 and A1519) in the loop of a conserved hairpin near the 3'-end of 16S rRNA in the 30S particle. May play a critical role in biogenesis of 30S subunits. The protein is Ribosomal RNA small subunit methyltransferase A of Erwinia tasmaniensis (strain DSM 17950 / CFBP 7177 / CIP 109463 / NCPPB 4357 / Et1/99).